We begin with the raw amino-acid sequence, 185 residues long: MILVIGLGNPGIVYQYTRHNIGFIAIERIANKYHLSFSTKQKFNCKIAEAIIDRQKICFIKPTTYMNLSGKSVILVKTYYNINYEKVFVIHDDIDLEIGRIKFKTGGSNGGHNGLKSIDSIIGSHYNRIRIGIGRPQNNHDVADYVLSNFSESEYKTVMQSIDNVANNFGLILEHKLAEFKNKIV.

Position 14 (Tyr-14) interacts with tRNA. His-19 serves as the catalytic Proton acceptor. TRNA-binding residues include Tyr-65, Asn-67, and Asn-113.

This sequence belongs to the PTH family. Monomer.

The protein resides in the cytoplasm. It carries out the reaction an N-acyl-L-alpha-aminoacyl-tRNA + H2O = an N-acyl-L-amino acid + a tRNA + H(+). Its function is as follows. Hydrolyzes ribosome-free peptidyl-tRNAs (with 1 or more amino acids incorporated), which drop off the ribosome during protein synthesis, or as a result of ribosome stalling. Catalyzes the release of premature peptidyl moieties from peptidyl-tRNA molecules trapped in stalled 50S ribosomal subunits, and thus maintains levels of free tRNAs and 50S ribosomes. The sequence is that of Peptidyl-tRNA hydrolase from Rickettsia typhi (strain ATCC VR-144 / Wilmington).